The chain runs to 160 residues: ATP synthase subunit b (160 aa).

Residues I5 to W27 traverse the membrane as a helical segment.

This sequence belongs to the ATPase B chain family. In terms of assembly, F-type ATPases have 2 components, F(1) - the catalytic core - and F(0) - the membrane proton channel. F(1) has five subunits: alpha(3), beta(3), gamma(1), delta(1), epsilon(1). F(0) has three main subunits: a(1), b(2) and c(10-14). The alpha and beta chains form an alternating ring which encloses part of the gamma chain. F(1) is attached to F(0) by a central stalk formed by the gamma and epsilon chains, while a peripheral stalk is formed by the delta and b chains.

The protein resides in the cell inner membrane. F(1)F(0) ATP synthase produces ATP from ADP in the presence of a proton or sodium gradient. F-type ATPases consist of two structural domains, F(1) containing the extramembraneous catalytic core and F(0) containing the membrane proton channel, linked together by a central stalk and a peripheral stalk. During catalysis, ATP synthesis in the catalytic domain of F(1) is coupled via a rotary mechanism of the central stalk subunits to proton translocation. In terms of biological role, component of the F(0) channel, it forms part of the peripheral stalk, linking F(1) to F(0). This is ATP synthase subunit b from Protochlamydia amoebophila (strain UWE25).